The following is an 861-amino-acid chain: Replication factor C subunit 1 (861 aa).

A disordered region spans residues 1–103; that stretch reads MVNISDFFGK…SSKSSDSASN (103 aa). Residues 16–28 show a composition bias toward polar residues; that stretch reads RSSTSRPTRQVGS. The residue at position 38 (Thr38) is a Phosphothreonine. Ser40 carries the post-translational modification Phosphoserine. Thr63 bears the Phosphothreonine mark. The BRCT domain maps to 153 to 243; it reads GKPNCLLGLT…PAEGGDGEAA (91 aa). Residues Thr299, Cys311, 353 to 361, and Asn456 each bind ATP; that span reads GPPGIGKTT. Residues 788–861 form a disordered region; sequence STIGGGGVGT…GGSKKRKTKA (74 aa). Positions 803–823 are enriched in acidic residues; sequence DFEDVVDADDNPVPADDEETQ. 2 short sequence motifs (nuclear localization signal) span residues 830-834 and 855-860; these read KKDKL and KKRKTK. A compositionally biased stretch (basic residues) spans 836 to 861; sequence KQKAKPTKRKTATSKPGGSKKRKTKA.

This sequence belongs to the activator 1 large subunit family. In terms of assembly, replication factor C (RFC) is a heteropentamer of subunits RFC1, RFC2, RFC3, RFC4 and RFC5 and forms a complex with POL30/PCNA in the presence of ATP. Interacts with ECO1 and POL30/PCNA.

The protein localises to the nucleus. Its function is as follows. Component of the ATP-dependent clamp loader RFC complex for the POL30/PCNA homotrimer DNA clamp. During a clamp loading circle, the RFC:clamp complex binds to DNA and the recognition of the double-stranded/single-stranded junction stimulates ATP hydrolysis by RFC. The complex presumably provides bipartite ATP sites in which one subunit supplies a catalytic site for hydrolysis of ATP bound to the neighboring subunit. Dissociation of RFC from the clamp leaves the clamp encircling DNA. Replication factor C (RFC or activator 1) complex acts during elongation of primed DNA templates by DNA polymerase delta and epsilon. RFC has an essential but redundant activity in sister chromatid cohesion establishment. In Saccharomyces cerevisiae (strain ATCC 204508 / S288c) (Baker's yeast), this protein is Replication factor C subunit 1 (RFC1).